The sequence spans 561 residues: MDSVNDSLVILDIKYWTNHNNKKIFDKNLMKFLKKDYFRKIPSTKHKDLPAIPFPNYHVCSNVKCSRLFDLRDNFVMSDYLKGGPKCPDCSRKSYPARFVVSCQENHLDDFPWRWWAHGKQDTECKGKLRLWSTGNTSSLDSLYVECECKKKKSLRGAMQDSSFENYKCTGNHPHKLNEKSNCNEPVIPLQRGASNVYFPALRSAIVIPSNASEDNNLDDFFTSVKEVINTYADLIGENWHYKFYSDRLTGHSEFSDAEDFIAKWTSYLNSNDSEEEIEYNQIKEAEYRAFTAFDRKVKMGDFEAEVETVPDDFQPYFNRIVKAHRLKEILVLLGFMRNDSPEPDVNEPKKIVWLESDGYENWLPAIEVHGEGIFIEFNHTTISKWLEENSELPKRSEKFSSLYASWIESKGWEVRDEKDIVYVMLHTFAHLLIKQLSLQSGYSSVAIKERIYCGKNMAGVLLYTGSTDQEGSLGGLVEMGSIDKLRPLIVDALEEAIFCSNDPSCASLEPSEDNQLNGCACFACSMVAETSCETGNRLLDRSLLVKTIDSKYSPFFKGLL.

The protein resides in the cytoplasm. In terms of biological role, component of antiviral defense system DISARM (defense island system associated with restriction-modification), composed of DrmE, DrmA, DrmB, DrmC and DrmMII. DISARM is probably a multi-gene restriction module, this subunit has an unknown function. Expression of DISARM in B.subtilis (strain BEST7003) confers resistance to phages Nf, phi29, phi105, phi3T, SPO1, SPR and SPP1. Protection is over 10(7)-fold against phi3T, 10(4)-10(5)-fold against Nf, phi29, phi105 and SPR, 100-fold against SPO1 and 10-fold against SPP1. DISARM does not interfere with phage adsorption, but instead interferes with (phi3T) DNA replication early in its cycle, preventing replication, circularization and lysogeny and probably causes phage DNA degradation (DNA is degraded in SPP1-infected cells). This is DISARM protein DrmB from Bacillus paralicheniformis (strain ATCC 9945a / NCIMB 11709 / CD-2).